A 354-amino-acid polypeptide reads, in one-letter code: 3-isopropylmalate dehydrogenase (354 aa).

Residue 76–87 (GPRWDSAKERPE) participates in NAD(+) binding. 4 residues coordinate substrate: Arg94, Arg104, Arg130, and Asp215. Mg(2+)-binding residues include Asp215, Asp239, and Asp243. Residue 273–285 (GSAPDIAGKNKAN) coordinates NAD(+).

This sequence belongs to the isocitrate and isopropylmalate dehydrogenases family. LeuB type 1 subfamily. As to quaternary structure, homodimer. Mg(2+) is required as a cofactor. Mn(2+) serves as cofactor.

It localises to the cytoplasm. The catalysed reaction is (2R,3S)-3-isopropylmalate + NAD(+) = 4-methyl-2-oxopentanoate + CO2 + NADH. It participates in amino-acid biosynthesis; L-leucine biosynthesis; L-leucine from 3-methyl-2-oxobutanoate: step 3/4. Functionally, catalyzes the oxidation of 3-carboxy-2-hydroxy-4-methylpentanoate (3-isopropylmalate) to 3-carboxy-4-methyl-2-oxopentanoate. The product decarboxylates to 4-methyl-2 oxopentanoate. This is 3-isopropylmalate dehydrogenase from Bacillus cereus (strain ATCC 10987 / NRS 248).